The following is a 259-amino-acid chain: MTELTAAAQRALTLMDLTTLNDDDTDEKVIALCRQANSPAGHTAAICIYPRFIPAARKALREQGTPDIRIATVTNFPHGNDDIEIALAETRAAIAYGADEVDVVFPYRALIAGNEQVGFELVKQCKQACLAANVLLKVIIETGELKQANLIRKASEIAINAGADFIKTSTGKVPVNATLESAELMMSVIRDMGVAKTVGFKPAGGVRTAEDALHYLQLADRILGEGWADARHFRFGASSLLASLLATLGHGAEPSGSGY.

Residue Asp-102 is the Proton donor/acceptor of the active site. Lys-167 acts as the Schiff-base intermediate with acetaldehyde in catalysis. The Proton donor/acceptor role is filled by Lys-201.

The protein belongs to the DeoC/FbaB aldolase family. DeoC type 2 subfamily.

Its subcellular location is the cytoplasm. The enzyme catalyses 2-deoxy-D-ribose 5-phosphate = D-glyceraldehyde 3-phosphate + acetaldehyde. It participates in carbohydrate degradation; 2-deoxy-D-ribose 1-phosphate degradation; D-glyceraldehyde 3-phosphate and acetaldehyde from 2-deoxy-alpha-D-ribose 1-phosphate: step 2/2. In terms of biological role, catalyzes a reversible aldol reaction between acetaldehyde and D-glyceraldehyde 3-phosphate to generate 2-deoxy-D-ribose 5-phosphate. In Serratia proteamaculans (strain 568), this protein is Deoxyribose-phosphate aldolase.